The primary structure comprises 271 residues: Tryptophan synthase alpha chain (271 aa).

Active-site proton acceptor residues include E49 and D60.

It belongs to the TrpA family. In terms of assembly, tetramer of two alpha and two beta chains.

The enzyme catalyses (1S,2R)-1-C-(indol-3-yl)glycerol 3-phosphate + L-serine = D-glyceraldehyde 3-phosphate + L-tryptophan + H2O. It participates in amino-acid biosynthesis; L-tryptophan biosynthesis; L-tryptophan from chorismate: step 5/5. The alpha subunit is responsible for the aldol cleavage of indoleglycerol phosphate to indole and glyceraldehyde 3-phosphate. The polypeptide is Tryptophan synthase alpha chain (Burkholderia mallei (strain NCTC 10247)).